The sequence spans 409 residues: Tryptophan synthase beta chain (409 aa).

Lys95 bears the N6-(pyridoxal phosphate)lysine mark.

This sequence belongs to the TrpB family. As to quaternary structure, tetramer of two alpha and two beta chains. Pyridoxal 5'-phosphate is required as a cofactor.

The catalysed reaction is (1S,2R)-1-C-(indol-3-yl)glycerol 3-phosphate + L-serine = D-glyceraldehyde 3-phosphate + L-tryptophan + H2O. It participates in amino-acid biosynthesis; L-tryptophan biosynthesis; L-tryptophan from chorismate: step 5/5. The beta subunit is responsible for the synthesis of L-tryptophan from indole and L-serine. In Pseudomonas syringae pv. tomato (strain ATCC BAA-871 / DC3000), this protein is Tryptophan synthase beta chain.